A 325-amino-acid polypeptide reads, in one-letter code: Treponemal membrane protein B (325 aa).

Residues 1–24 (MKTRNFSLVSALYVLLGVPLFVSA) form the signal peptide. The EAARKAAE repeat unit spans residues 159–166 (EAARKAAE). The ARKLEEQRIAAQKAQEERKRAEE repeat unit spans residues 167–189 (ARKLEEQRIAAQKAQEERKRAEE). The segment at 176-224 (AAQKAQEERKRAEEEAARKAAEARKLEEQRIAAQKAQEERKRAEEEAAR) is disordered. Residues 190–197 (EAARKAAE) form an EAARKAAE repeat. An ARKLEEQRIAAQKAQEERKRAEE repeat occupies 198 to 220 (ARKLEEQRIAAQKAQEERKRAEE). The EAARKAAE repeat unit spans residues 221 to 228 (EAARKAAE). The stretch at 229–236 (EAARKAEE) is one EAARKAEE repeat.

This sequence to T.phagedenis TmpB.

Its subcellular location is the cell outer membrane. Tmp may serve as a porin or transport protein for large molecules. The sequence is that of Treponemal membrane protein B (tmpB) from Treponema pallidum (strain Nichols).